A 181-amino-acid polypeptide reads, in one-letter code: Oligoribonuclease (181 aa).

The region spanning 8-171 (LIWIDLEMTG…DDIRESIAEL (164 aa)) is the Exonuclease domain. Tyr-129 is a catalytic residue.

It belongs to the oligoribonuclease family.

The protein localises to the cytoplasm. In terms of biological role, 3'-to-5' exoribonuclease specific for small oligoribonucleotides. This is Oligoribonuclease from Vibrio cholerae serotype O1 (strain ATCC 39541 / Classical Ogawa 395 / O395).